We begin with the raw amino-acid sequence, 134 residues long: Profilin (134 aa).

It belongs to the profilin family. As to quaternary structure, occurs in many kinds of cells as a complex with monomeric actin in a 1:1 ratio.

It localises to the cytoplasm. It is found in the cytoskeleton. Binds to actin and affects the structure of the cytoskeleton. At high concentrations, profilin prevents the polymerization of actin, whereas it enhances it at low concentrations. By binding to PIP2, it inhibits the formation of IP3 and DG. The sequence is that of Profilin from Brassica napus (Rape).